Consider the following 198-residue polypeptide: Nascent polypeptide-associated complex subunit alpha (198 aa).

Positions 48–113 (ITRVVLKRTR…QAAAETGSVS (66 aa)) constitute an NAC-A/B domain. Residues 159 to 198 (LEDSDIKLVMEQANVSRNKAINGLKKNDSDVVNTIMDLCK) form the UBA domain.

This sequence belongs to the NAC-alpha family. Part of the nascent polypeptide-associated complex (NAC), consisting of EGD2 and EGD1. NAC associates with ribosomes via EGD1.

The protein resides in the cytoplasm. It is found in the nucleus. Functionally, component of the nascent polypeptide-associated complex (NAC), a dynamic component of the ribosomal exit tunnel, protecting the emerging polypeptides from interaction with other cytoplasmic proteins to ensure appropriate nascent protein targeting. The NAC complex also promotes mitochondrial protein import by enhancing productive ribosome interactions with the outer mitochondrial membrane and blocks the inappropriate interaction of ribosomes translating non-secretory nascent polypeptides with translocation sites in the membrane of the endoplasmic reticulum. EGD2 may also be involved in transcription regulation. This chain is Nascent polypeptide-associated complex subunit alpha (EGD2), found in Yarrowia lipolytica (strain CLIB 122 / E 150) (Yeast).